The sequence spans 307 residues: Transaldolase (307 aa).

Residue K125 is the Schiff-base intermediate with substrate of the active site.

Belongs to the transaldolase family. Type 1 subfamily. In terms of assembly, homodimer.

The protein resides in the cytoplasm. The enzyme catalyses D-sedoheptulose 7-phosphate + D-glyceraldehyde 3-phosphate = D-erythrose 4-phosphate + beta-D-fructose 6-phosphate. It participates in carbohydrate degradation; pentose phosphate pathway; D-glyceraldehyde 3-phosphate and beta-D-fructose 6-phosphate from D-ribose 5-phosphate and D-xylulose 5-phosphate (non-oxidative stage): step 2/3. In terms of biological role, transaldolase is important for the balance of metabolites in the pentose-phosphate pathway. This Pseudomonas paraeruginosa (strain DSM 24068 / PA7) (Pseudomonas aeruginosa (strain PA7)) protein is Transaldolase.